We begin with the raw amino-acid sequence, 349 residues long: Protein RecA (349 aa).

66 to 73 (GPESSGKT) is an ATP binding site.

The protein belongs to the RecA family.

The protein localises to the cytoplasm. Functionally, can catalyze the hydrolysis of ATP in the presence of single-stranded DNA, the ATP-dependent uptake of single-stranded DNA by duplex DNA, and the ATP-dependent hybridization of homologous single-stranded DNAs. It interacts with LexA causing its activation and leading to its autocatalytic cleavage. The protein is Protein RecA of Psychrobacter sp. (strain PRwf-1).